We begin with the raw amino-acid sequence, 275 residues long: 3-methyl-2-oxobutanoate hydroxymethyltransferase (275 aa).

D49 and D88 together coordinate Mg(2+). 3-methyl-2-oxobutanoate is bound by residues 49-50 (DS), D88, and K118. E120 lines the Mg(2+) pocket. E187 serves as the catalytic Proton acceptor.

The protein belongs to the PanB family. Homodecamer; pentamer of dimers. Mg(2+) serves as cofactor.

Its subcellular location is the cytoplasm. The catalysed reaction is 3-methyl-2-oxobutanoate + (6R)-5,10-methylene-5,6,7,8-tetrahydrofolate + H2O = 2-dehydropantoate + (6S)-5,6,7,8-tetrahydrofolate. It participates in cofactor biosynthesis; (R)-pantothenate biosynthesis; (R)-pantoate from 3-methyl-2-oxobutanoate: step 1/2. Functionally, catalyzes the reversible reaction in which hydroxymethyl group from 5,10-methylenetetrahydrofolate is transferred onto alpha-ketoisovalerate to form ketopantoate. The polypeptide is 3-methyl-2-oxobutanoate hydroxymethyltransferase (Bartonella henselae (strain ATCC 49882 / DSM 28221 / CCUG 30454 / Houston 1) (Rochalimaea henselae)).